A 221-amino-acid polypeptide reads, in one-letter code: 7-cyano-7-deazaguanine synthase (221 aa).

8–18 (LSGGMDSAAVI) contacts ATP. Zn(2+)-binding residues include Cys186, Cys196, Cys199, and Cys202.

Belongs to the QueC family. It depends on Zn(2+) as a cofactor.

It carries out the reaction 7-carboxy-7-deazaguanine + NH4(+) + ATP = 7-cyano-7-deazaguanine + ADP + phosphate + H2O + H(+). Its pathway is purine metabolism; 7-cyano-7-deazaguanine biosynthesis. Catalyzes the ATP-dependent conversion of 7-carboxy-7-deazaguanine (CDG) to 7-cyano-7-deazaguanine (preQ(0)). This is 7-cyano-7-deazaguanine synthase from Stenotrophomonas maltophilia (strain R551-3).